The sequence spans 96 residues: Protein RnfH (96 aa).

This sequence belongs to the UPF0125 (RnfH) family.

The chain is Protein RnfH from Shigella flexneri.